We begin with the raw amino-acid sequence, 1054 residues long: DIS3-like exonuclease 1 (1054 aa).

The region spanning 236–313 (AGIKSGRYIQ…WKGRTAALCE (78 aa)) is the CSD1 domain. Positions 313–332 (ENDSEDKASGESPSEPMPTG) are disordered. The 67-residue stretch at 365-431 (ILVTPWDYRI…GEIATILVEN (67 aa)) folds into the CSD2 domain. The region spanning 465 to 816 (RRDLRSTHLV…VHRLLMAAIS (352 aa)) is the RNB domain. Ser989 bears the Phosphoserine mark.

It belongs to the RNR ribonuclease family. Component of the RNA exosome complex. The catalytically inactive RNA exosome core (Exo-9) complex is believed to associate with catalytic subunits EXOSC10, and DIS3 or DIS3L in cytoplasmic- and nuclear-specific RNA exosome complex forms. Requires Mg(2+) as cofactor.

Its subcellular location is the cytoplasm. The catalysed reaction is Exonucleolytic cleavage in the 3'- to 5'-direction to yield nucleoside 5'-phosphates.. Functionally, catalytic component of the RNA exosome complex which has 3'-&gt;5' exoribonuclease activity and participates in a multitude of cellular RNA processing and degradation events. In the cytoplasm, the RNA exosome complex is involved in general mRNA turnover and specifically degrades inherently unstable mRNAs containing AU-rich elements (AREs) within their 3' untranslated regions, and in RNA surveillance pathways, preventing translation of aberrant mRNAs. It seems to be involved in degradation of histone mRNA. The chain is DIS3-like exonuclease 1 (Dis3l) from Rattus norvegicus (Rat).